The primary structure comprises 144 residues: Deoxyuridine 5'-triphosphate nucleotidohydrolase (144 aa).

Residues 63–65 (RSG), asparagine 76, and 80–82 (TID) contribute to the substrate site.

The protein belongs to the dUTPase family. The cofactor is Mg(2+).

The enzyme catalyses dUTP + H2O = dUMP + diphosphate + H(+). It functions in the pathway pyrimidine metabolism; dUMP biosynthesis; dUMP from dCTP (dUTP route): step 2/2. This enzyme is involved in nucleotide metabolism: it produces dUMP, the immediate precursor of thymidine nucleotides and it decreases the intracellular concentration of dUTP so that uracil cannot be incorporated into DNA. The sequence is that of Deoxyuridine 5'-triphosphate nucleotidohydrolase from Porphyromonas gingivalis (strain ATCC 33277 / DSM 20709 / CIP 103683 / JCM 12257 / NCTC 11834 / 2561).